Consider the following 349-residue polypeptide: Palmitoyltransferase PFA5 (349 aa).

The next 2 membrane-spanning stretches (helical) occupy residues 19–39 (LIPF…CHQF) and 57–77 (LIIV…LMLV). Residues 126–176 (IWCSNCQSLKMSRTHHSTKVGYCVPRFDHYCVWIGTVLGRLNYKLFVQFTF) form the DHHC domain. Cys156 (S-palmitoyl cysteine intermediate) is an active-site residue. The next 2 membrane-spanning stretches (helical) occupy residues 170–190 (LFVQ…ISIA) and 204–224 (VYAV…LFLT).

The protein belongs to the DHHC palmitoyltransferase family. PFA5 subfamily.

The protein localises to the membrane. It catalyses the reaction L-cysteinyl-[protein] + hexadecanoyl-CoA = S-hexadecanoyl-L-cysteinyl-[protein] + CoA. The protein is Palmitoyltransferase PFA5 (PFA5) of Kluyveromyces lactis (strain ATCC 8585 / CBS 2359 / DSM 70799 / NBRC 1267 / NRRL Y-1140 / WM37) (Yeast).